Here is a 349-residue protein sequence, read N- to C-terminus: AdoMet-dependent heme synthase (349 aa).

The region spanning 5–214 (TNAPRLIAWE…LHWFYEMQKE (210 aa)) is the Radical SAM core domain. Residues Cys19, Cys23, and Cys26 each coordinate [4Fe-4S] cluster.

It belongs to the radical SAM superfamily. Requires [4Fe-4S] cluster as cofactor.

It carries out the reaction Fe-coproporphyrin III + 2 S-adenosyl-L-methionine = heme b + 2 5'-deoxyadenosine + 2 L-methionine + 2 CO2. It functions in the pathway porphyrin-containing compound metabolism; protoheme biosynthesis. Involved in siroheme-dependent heme b biosynthesis. Catalyzes the conversion of Fe-coproporphyrin III into heme by the oxidative decarboxylation of two propionate side chains. The protein is AdoMet-dependent heme synthase of Methanosarcina barkeri (strain Fusaro / DSM 804).